A 161-amino-acid chain; its full sequence is Phosphopantetheine adenylyltransferase (161 aa).

Ser-10 contributes to the substrate binding site. Residues 10–11 (SF) and His-18 contribute to the ATP site. Positions 42, 74, and 88 each coordinate substrate. ATP contacts are provided by residues 88-89 (RG), Glu-99, and 124-130 (YSFLSSS).

This sequence belongs to the bacterial CoaD family. In terms of assembly, homohexamer. Mg(2+) is required as a cofactor.

The protein localises to the cytoplasm. It carries out the reaction (R)-4'-phosphopantetheine + ATP + H(+) = 3'-dephospho-CoA + diphosphate. The protein operates within cofactor biosynthesis; coenzyme A biosynthesis; CoA from (R)-pantothenate: step 4/5. Reversibly transfers an adenylyl group from ATP to 4'-phosphopantetheine, yielding dephospho-CoA (dPCoA) and pyrophosphate. The sequence is that of Phosphopantetheine adenylyltransferase from Bacillus subtilis (strain 168).